Here is a 254-residue protein sequence, read N- to C-terminus: HTH-type transcriptional regulator GlvR (254 aa).

One can recognise an HTH rpiR-type domain in the interval 1-77 (MQLEELINQH…VFLKWEDQPE (77 aa)). The H-T-H motif DNA-binding region spans 37 to 56 (IDALAKACSVSRSSILRLAQ). The SIS domain occupies 106 to 248 (MCQLIDAADR…FRAYVDYKEA (143 aa)).

Positive regulator of the glv operon expression, which consists of GlvA, GlvR and GlvC. The protein is HTH-type transcriptional regulator GlvR (glvR) of Bacillus subtilis (strain 168).